The sequence spans 247 residues: Probable transcriptional regulatory protein GM21_0933 (247 aa).

It belongs to the TACO1 family.

It localises to the cytoplasm. This chain is Probable transcriptional regulatory protein GM21_0933, found in Geobacter sp. (strain M21).